The sequence spans 147 residues: Myoglobin (147 aa).

One can recognise a Globin domain in the interval 2 to 141 (ADFDAVLKFW…FIADMDANYK (140 aa)). His60 is a binding site for nitrite. O2 is bound at residue His60. His89 is a heme b binding site.

It belongs to the globin family. In terms of assembly, monomeric.

The protein localises to the cytoplasm. It is found in the sarcoplasm. It carries out the reaction Fe(III)-heme b-[protein] + nitric oxide + H2O = Fe(II)-heme b-[protein] + nitrite + 2 H(+). The enzyme catalyses H2O2 + AH2 = A + 2 H2O. Its function is as follows. Monomeric heme protein which primary function is to store oxygen and facilitate its diffusion within muscle tissues. Reversibly binds oxygen through a pentacoordinated heme iron and enables its timely and efficient release as needed during periods of heightened demand. Depending on the oxidative conditions of tissues and cells, and in addition to its ability to bind oxygen, it also has a nitrite reductase activity whereby it regulates the production of bioactive nitric oxide. Under stress conditions, like hypoxia and anoxia, it also protects cells against reactive oxygen species thanks to its pseudoperoxidase activity. The sequence is that of Myoglobin (mb) from Scomber japonicus (Chub mackerel).